Reading from the N-terminus, the 220-residue chain is MDNVVLMPREKLLASGAESLTDQELLAIFLRTGIKGMPVMQLSQEVLNGFGSLRELLSADLATFCRMKGLGQTQFIQLQASKEMTKRYLAQQMQVRENINEPYLAVMCFQAELESEEREVFMVMFLDNQNRLIKKEKMFYGTINQATVYPREIIKEALKCNAAAIIVAHNHPSGNCTPSESDRALTKKLEMACDLVGIRFVDHIVVGKGDYFSFEEEKFR.

The MPN domain occupies 98–220 (NINEPYLAVM…YFSFEEEKFR (123 aa)). Zn(2+) is bound by residues His-169, His-171, and Asp-182. Residues 169–182 (HNHPSGNCTPSESD) carry the JAMM motif motif.

It belongs to the UPF0758 family.

This is UPF0758 protein APL_1970 from Actinobacillus pleuropneumoniae serotype 5b (strain L20).